The primary structure comprises 332 residues: Ubiquinone biosynthesis protein COQ4, mitochondrial (332 aa).

The N-terminal 16 residues, 1-16 (MFTVSKKSLQASRNAF), are a transit peptide targeting the mitochondrion. The Zn(2+) site is built by histidine 212, aspartate 213, histidine 216, and glutamate 228.

This sequence belongs to the COQ4 family. As to quaternary structure, component of a multi-subunit COQ enzyme complex, composed of at least COQ3, COQ4, COQ5, COQ6, COQ7 and COQ9. It depends on Zn(2+) as a cofactor.

The protein localises to the mitochondrion inner membrane. The catalysed reaction is a 4-hydroxy-3-methoxy-5-(all-trans-polyprenyl)benzoate + H(+) = a 2-methoxy-6-(all-trans-polyprenyl)phenol + CO2. It participates in cofactor biosynthesis; ubiquinone biosynthesis. Lyase that catalyzes the C1-decarboxylation of 4-hydroxy-3-methoxy-5-(all-trans-polyprenyl)benzoic acid into 2-methoxy-6-(all-trans-polyprenyl)phenol during ubiquinone biosynthesis. This is Ubiquinone biosynthesis protein COQ4, mitochondrial from Kluyveromyces lactis (strain ATCC 8585 / CBS 2359 / DSM 70799 / NBRC 1267 / NRRL Y-1140 / WM37) (Yeast).